A 179-amino-acid chain; its full sequence is MTFDHDLKASVRTIPDYPKPGIMFRDITTLLADARAFRRAVDELVNPWAGNKIDKVAGMEARGFIIGGAVAHQLSAGFVPIRKKGKLPHTTVRIAYSLEYGIDEMEMHVDAIQPGERVILVDDLIATGGTAEGAVKLLRQIGANVVAACFIIDLPELGGAAKLRAMDVPVRTLMTFEGH.

Belongs to the purine/pyrimidine phosphoribosyltransferase family. As to quaternary structure, homodimer.

The protein localises to the cytoplasm. It catalyses the reaction AMP + diphosphate = 5-phospho-alpha-D-ribose 1-diphosphate + adenine. It participates in purine metabolism; AMP biosynthesis via salvage pathway; AMP from adenine: step 1/1. Functionally, catalyzes a salvage reaction resulting in the formation of AMP, that is energically less costly than de novo synthesis. The protein is Adenine phosphoribosyltransferase of Bradyrhizobium diazoefficiens (strain JCM 10833 / BCRC 13528 / IAM 13628 / NBRC 14792 / USDA 110).